The sequence spans 89 residues: Small ribosomal subunit protein uS19 (89 aa).

Belongs to the universal ribosomal protein uS19 family.

Protein S19 forms a complex with S13 that binds strongly to the 16S ribosomal RNA. The polypeptide is Small ribosomal subunit protein uS19 (Brachyspira hyodysenteriae (strain ATCC 49526 / WA1)).